We begin with the raw amino-acid sequence, 161 residues long: RNA pyrophosphohydrolase (161 aa).

The Nudix hydrolase domain maps to 6–149; it reads GYRPNVGIIL…KKDVYRRALK (144 aa). Residues 38–59 carry the Nudix box motif; the sequence is GGIKSDETPEEALFRELKEEVG.

Belongs to the Nudix hydrolase family. RppH subfamily. The cofactor is a divalent metal cation.

Accelerates the degradation of transcripts by removing pyrophosphate from the 5'-end of triphosphorylated RNA, leading to a more labile monophosphorylated state that can stimulate subsequent ribonuclease cleavage. This Marinomonas sp. (strain MWYL1) protein is RNA pyrophosphohydrolase.